The sequence spans 469 residues: Citrate synthase, mitochondrial (469 aa).

Residues 1 to 30 (MSFLTVSRLAPKLLNSKNATYFLVAARNAS) constitute a mitochondrion transit peptide. Catalysis depends on residues His304 and His350. Oxaloacetate is bound at residue Arg359. Asp405 is a catalytic residue. The oxaloacetate site is built by Arg431 and Arg451.

Belongs to the citrate synthase family. In terms of assembly, homodimer.

It localises to the mitochondrion matrix. It carries out the reaction oxaloacetate + acetyl-CoA + H2O = citrate + CoA + H(+). It functions in the pathway carbohydrate metabolism; tricarboxylic acid cycle; isocitrate from oxaloacetate: step 1/2. In terms of biological role, key enzyme of the Krebs tricarboxylic acid cycle which catalyzes the synthesis of citrate from acetyl coenzyme A and oxaloacetate. The protein is Citrate synthase, mitochondrial (cs) of Xiphias gladius (Swordfish).